We begin with the raw amino-acid sequence, 217 residues long: Small ribosomal subunit protein uS3c (217 aa).

The region spanning 39–109 is the KH type-2 domain; the sequence is IRNFLRTKLI…RFRITITYIP (71 aa).

The protein belongs to the universal ribosomal protein uS3 family. As to quaternary structure, part of the 30S ribosomal subunit.

The protein resides in the plastid. Its subcellular location is the chloroplast. In Chlorokybus atmophyticus (Soil alga), this protein is Small ribosomal subunit protein uS3c (rps3).